The chain runs to 429 residues: 46 kDa membrane protein (429 aa).

The next 9 helical transmembrane spans lie at A26–F46, T51–L71, L99–I119, F173–P193, L224–V244, T279–V299, L315–I335, I360–A380, and I407–V427.

This sequence belongs to the CitM (TC 2.A.11) transporter family.

It is found in the cell membrane. In Mycobacterium leprae (strain TN), this protein is 46 kDa membrane protein (ag45).